Reading from the N-terminus, the 466-residue chain is Glutamate decarboxylase alpha (466 aa).

Thr62 and Asn83 together coordinate substrate. Residues 126–127 (SS), Thr212, and His275 each bind pyridoxal 5'-phosphate. Lys276 is subject to N6-(pyridoxal phosphate)lysine.

The protein belongs to the group II decarboxylase family. As to quaternary structure, homohexamer. Requires pyridoxal 5'-phosphate as cofactor.

It catalyses the reaction L-glutamate + H(+) = 4-aminobutanoate + CO2. Converts glutamate to gamma-aminobutyrate (GABA), consuming one intracellular proton in the reaction. The gad system helps to maintain a near-neutral intracellular pH when cells are exposed to extremely acidic conditions. The ability to survive transit through the acidic conditions of the stomach is essential for successful colonization of the mammalian host by commensal and pathogenic bacteria. The protein is Glutamate decarboxylase alpha (gadA) of Shigella flexneri.